Consider the following 88-residue polypeptide: MKTQQFTVIDPLGIHARPASQLVAKATPFASAIEVRTEEKAANLKSILGVMGLALKQGSQFTLYVEGEDEDQAFEALATLLTEMGLAQ.

An HPr domain is found at 1–88 (MKTQQFTVID…TLLTEMGLAQ (88 aa)). The active-site Pros-phosphohistidine intermediate is the His15. The residue at position 46 (Ser46) is a Phosphoserine; by HPrK/P.

It belongs to the HPr family.

Its subcellular location is the cytoplasm. With respect to regulation, phosphorylation on Ser-46 inhibits the phosphoryl transfer from enzyme I to HPr. General (non sugar-specific) component of the phosphoenolpyruvate-dependent sugar phosphotransferase system (sugar PTS). This major carbohydrate active-transport system catalyzes the phosphorylation of incoming sugar substrates concomitantly with their translocation across the cell membrane. The phosphoryl group from phosphoenolpyruvate (PEP) is transferred to the phosphoryl carrier protein HPr by enzyme I. Phospho-HPr then transfers it to the PTS EIIA domain. Its function is as follows. P-Ser-HPr interacts with the catabolite control protein A (CcpA), forming a complex that binds to DNA at the catabolite response elements cre, operator sites preceding a large number of catabolite-regulated genes. Thus, P-Ser-HPr is a corepressor in carbon catabolite repression (CCR), a mechanism that allows bacteria to coordinate and optimize the utilization of available carbon sources. P-Ser-HPr also plays a role in inducer exclusion, in which it probably interacts with several non-PTS permeases and inhibits their transport activity. The protein is Phosphocarrier protein HPr (ptsH) of Lysinibacillus sphaericus (Bacillus sphaericus).